We begin with the raw amino-acid sequence, 206 residues long: 2,3-bisphosphoglycerate-dependent phosphoglycerate mutase (206 aa).

Substrate-binding positions include 9–16, 22–23, R61, 88–91, K99, 115–116, and 159–160; these read RHGQSEWN, TG, ERDY, RR, and GN. H10 functions as the Tele-phosphohistidine intermediate in the catalytic mechanism. Residue E88 is the Proton donor/acceptor of the active site.

The protein belongs to the phosphoglycerate mutase family. BPG-dependent PGAM subfamily. Homodimer.

It carries out the reaction (2R)-2-phosphoglycerate = (2R)-3-phosphoglycerate. It participates in carbohydrate degradation; glycolysis; pyruvate from D-glyceraldehyde 3-phosphate: step 3/5. Functionally, catalyzes the interconversion of 2-phosphoglycerate and 3-phosphoglycerate. This is 2,3-bisphosphoglycerate-dependent phosphoglycerate mutase from Bartonella quintana (strain Toulouse) (Rochalimaea quintana).